The primary structure comprises 313 residues: Acetyl-coenzyme A carboxylase carboxyl transferase subunit beta, chloroplastic (313 aa).

In terms of domain architecture, CoA carboxyltransferase N-terminal spans 47–313 (LWTRCDNCEN…SAPCRRSNNS (267 aa)). C51, C54, C70, and C73 together coordinate Zn(2+). A C4-type zinc finger spans residues 51–73 (CDNCENMLYIRFLRQNKRICEEC).

It belongs to the AccD/PCCB family. As to quaternary structure, acetyl-CoA carboxylase is a heterohexamer composed of biotin carboxyl carrier protein, biotin carboxylase and 2 subunits each of ACCase subunit alpha and ACCase plastid-coded subunit beta (accD). It depends on Zn(2+) as a cofactor.

Its subcellular location is the plastid. The protein resides in the chloroplast stroma. It catalyses the reaction N(6)-carboxybiotinyl-L-lysyl-[protein] + acetyl-CoA = N(6)-biotinyl-L-lysyl-[protein] + malonyl-CoA. It participates in lipid metabolism; malonyl-CoA biosynthesis; malonyl-CoA from acetyl-CoA: step 1/1. Component of the acetyl coenzyme A carboxylase (ACC) complex. Biotin carboxylase (BC) catalyzes the carboxylation of biotin on its carrier protein (BCCP) and then the CO(2) group is transferred by the transcarboxylase to acetyl-CoA to form malonyl-CoA. In Anthoceros angustus (Hornwort), this protein is Acetyl-coenzyme A carboxylase carboxyl transferase subunit beta, chloroplastic.